The following is a 660-amino-acid chain: Bifunctional polymyxin resistance protein ArnA (660 aa).

A formyltransferase ArnAFT region spans residues Met-1–Phe-304. His-104 (proton donor; for formyltransferase activity) is an active-site residue. Residues Arg-114 and Thr-136–Asp-140 contribute to the (6R)-10-formyltetrahydrofolate site. A dehydrogenase ArnADH region spans residues Arg-316–Lys-660. NAD(+) contacts are provided by residues Asp-349 and Asp-370–Ile-371. UDP-alpha-D-glucuronate is bound by residues Ala-395, Tyr-400, and Thr-434–Ser-435. Glu-436 (proton acceptor; for decarboxylase activity) is an active-site residue. Residues Arg-462, Asn-494, Lys-528–Arg-537, and Tyr-615 contribute to the UDP-alpha-D-glucuronate site. Residue Arg-621 is the Proton donor; for decarboxylase activity of the active site.

The protein in the N-terminal section; belongs to the Fmt family. UDP-L-Ara4N formyltransferase subfamily. In the C-terminal section; belongs to the NAD(P)-dependent epimerase/dehydratase family. UDP-glucuronic acid decarboxylase subfamily. In terms of assembly, homohexamer, formed by a dimer of trimers.

It carries out the reaction UDP-alpha-D-glucuronate + NAD(+) = UDP-beta-L-threo-pentopyranos-4-ulose + CO2 + NADH. It catalyses the reaction UDP-4-amino-4-deoxy-beta-L-arabinose + (6R)-10-formyltetrahydrofolate = UDP-4-deoxy-4-formamido-beta-L-arabinose + (6S)-5,6,7,8-tetrahydrofolate + H(+). It functions in the pathway nucleotide-sugar biosynthesis; UDP-4-deoxy-4-formamido-beta-L-arabinose biosynthesis; UDP-4-deoxy-4-formamido-beta-L-arabinose from UDP-alpha-D-glucuronate: step 1/3. It participates in nucleotide-sugar biosynthesis; UDP-4-deoxy-4-formamido-beta-L-arabinose biosynthesis; UDP-4-deoxy-4-formamido-beta-L-arabinose from UDP-alpha-D-glucuronate: step 3/3. The protein operates within bacterial outer membrane biogenesis; lipopolysaccharide biosynthesis. Functionally, bifunctional enzyme that catalyzes the oxidative decarboxylation of UDP-glucuronic acid (UDP-GlcUA) to UDP-4-keto-arabinose (UDP-Ara4O) and the addition of a formyl group to UDP-4-amino-4-deoxy-L-arabinose (UDP-L-Ara4N) to form UDP-L-4-formamido-arabinose (UDP-L-Ara4FN). The modified arabinose is attached to lipid A and is required for resistance to polymyxin and cationic antimicrobial peptides. The protein is Bifunctional polymyxin resistance protein ArnA of Shewanella sediminis (strain HAW-EB3).